Reading from the N-terminus, the 284-residue chain is 2-dehydro-3-deoxyphosphooctonate aldolase (284 aa).

It belongs to the KdsA family.

It is found in the cytoplasm. It carries out the reaction D-arabinose 5-phosphate + phosphoenolpyruvate + H2O = 3-deoxy-alpha-D-manno-2-octulosonate-8-phosphate + phosphate. The protein operates within carbohydrate biosynthesis; 3-deoxy-D-manno-octulosonate biosynthesis; 3-deoxy-D-manno-octulosonate from D-ribulose 5-phosphate: step 2/3. Its pathway is bacterial outer membrane biogenesis; lipopolysaccharide biosynthesis. The sequence is that of 2-dehydro-3-deoxyphosphooctonate aldolase from Citrobacter koseri (strain ATCC BAA-895 / CDC 4225-83 / SGSC4696).